The following is a 525-amino-acid chain: Mitochondrial-processing peptidase subunit alpha (525 aa).

A mitochondrion-targeting transit peptide spans 1–33 (MAAVVLAATRLLRGSGSWGCSRLRFGPPAYRRF). Lys64 is modified (N6-succinyllysine). Lys299 is subject to N6-acetyllysine.

The protein belongs to the peptidase M16 family. As to quaternary structure, heterodimer of PMPCA (alpha) and PMPCB (beta) subunits, forming the mitochondrial processing protease (MPP) in which PMPCA is involved in substrate recognition and binding and PMPCB is the catalytic subunit.

Its subcellular location is the mitochondrion matrix. It is found in the mitochondrion inner membrane. Its function is as follows. Substrate recognition and binding subunit of the essential mitochondrial processing protease (MPP), which cleaves the mitochondrial sequence off newly imported precursors proteins. This is Mitochondrial-processing peptidase subunit alpha (PMPCA) from Pongo abelii (Sumatran orangutan).